Consider the following 131-residue polypeptide: Snaclec A8 (131 aa).

3 disulfide bridges follow: Cys2–Cys13, Cys30–Cys129, and Cys104–Cys121. In terms of domain architecture, C-type lectin spans 9-130; that stretch reads HEGHCYKVFN…CGQPYRFTCE (122 aa).

This sequence belongs to the snaclec family. In terms of assembly, heterodimer; disulfide-linked. As to expression, expressed by the venom gland.

It localises to the secreted. Functionally, interferes with one step of hemostasis (modulation of platelet aggregation, or coagulation cascade, for example). This chain is Snaclec A8, found in Macrovipera lebetinus (Levantine viper).